Here is a 213-residue protein sequence, read N- to C-terminus: Probable nicotinate-nucleotide adenylyltransferase (213 aa).

It belongs to the NadD family.

It catalyses the reaction nicotinate beta-D-ribonucleotide + ATP + H(+) = deamido-NAD(+) + diphosphate. The protein operates within cofactor biosynthesis; NAD(+) biosynthesis; deamido-NAD(+) from nicotinate D-ribonucleotide: step 1/1. In terms of biological role, catalyzes the reversible adenylation of nicotinate mononucleotide (NaMN) to nicotinic acid adenine dinucleotide (NaAD). The sequence is that of Probable nicotinate-nucleotide adenylyltransferase from Escherichia coli O17:K52:H18 (strain UMN026 / ExPEC).